The following is a 501-amino-acid chain: Probable malate:quinone oxidoreductase (501 aa).

This sequence belongs to the MQO family. The cofactor is FAD.

It catalyses the reaction (S)-malate + a quinone = a quinol + oxaloacetate. The protein operates within carbohydrate metabolism; tricarboxylic acid cycle; oxaloacetate from (S)-malate (quinone route): step 1/1. This Paenarthrobacter aurescens (strain TC1) protein is Probable malate:quinone oxidoreductase.